The following is an 83-amino-acid chain: MSGSTGGRSFADIITSIRYWVIHSITIPSLFIAGWLFVSTGLAYDVFGSPRPNEYFTESRQGIPLITGRFDSLEQLDEFSRSF.

Residues 21–35 (VIHSITIPSLFIAGW) traverse the membrane as a helical segment. Residue histidine 23 coordinates heme.

It belongs to the PsbE/PsbF family. Heterodimer of an alpha subunit and a beta subunit. PSII is composed of 1 copy each of membrane proteins PsbA, PsbB, PsbC, PsbD, PsbE, PsbF, PsbH, PsbI, PsbJ, PsbK, PsbL, PsbM, PsbT, PsbX, PsbY, PsbZ, Psb30/Ycf12, at least 3 peripheral proteins of the oxygen-evolving complex and a large number of cofactors. It forms dimeric complexes. The cofactor is heme b.

The protein resides in the plastid. It localises to the chloroplast thylakoid membrane. This b-type cytochrome is tightly associated with the reaction center of photosystem II (PSII). PSII is a light-driven water:plastoquinone oxidoreductase that uses light energy to abstract electrons from H(2)O, generating O(2) and a proton gradient subsequently used for ATP formation. It consists of a core antenna complex that captures photons, and an electron transfer chain that converts photonic excitation into a charge separation. This Oenothera berteroana (Bertero's evening primrose) protein is Cytochrome b559 subunit alpha.